The primary structure comprises 544 residues: Nucleosome assembly protein 1-like 3 (544 aa).

2 disordered regions span residues 1–109 (MAEA…LFLD) and 168–345 (PTEE…KKED). Positions 35-83 (SNSSSSTNSCSSSGSSSSGSSSSSSSSSSSSSSSSSSSSGSSGSSSNGS) are enriched in low complexity. Residues 168–192 (PTEEECEWNSEEEFSGDEEMQDDTP) show a composition bias toward acidic residues. Composition is skewed to basic and acidic residues over residues 207–228 (CNEK…PEAK), 235–277 (PKET…KADS), and 314–332 (PARE…EGVN).

This sequence belongs to the nucleosome assembly protein (NAP) family. Expressed in brain.

The protein localises to the nucleus. The protein resides in the cytoplasm. The sequence is that of Nucleosome assembly protein 1-like 3 (Nap1l3) from Mus musculus (Mouse).